Here is a 721-residue protein sequence, read N- to C-terminus: Glucans biosynthesis glucosyltransferase H (721 aa).

The next 6 helical transmembrane spans lie at 53-75 (VLIM…QVLQ), 85-107 (VVLV…ALAG), 404-426 (GIGA…LISL), 456-478 (WVFA…LVLI), 490-512 (LRTF…VMMV), and 567-589 (WPLL…VALL).

Belongs to the glycosyltransferase 2 family. OpgH subfamily.

It localises to the cell inner membrane. It functions in the pathway glycan metabolism; osmoregulated periplasmic glucan (OPG) biosynthesis. Functionally, involved in the biosynthesis of osmoregulated periplasmic glucans (OPGs). The chain is Glucans biosynthesis glucosyltransferase H from Rhodopseudomonas palustris (strain ATCC BAA-98 / CGA009).